A 223-amino-acid chain; its full sequence is Cytidylate kinase (223 aa).

10–18 (GPASSGKST) contacts ATP.

It belongs to the cytidylate kinase family. Type 1 subfamily.

It localises to the cytoplasm. The catalysed reaction is CMP + ATP = CDP + ADP. It carries out the reaction dCMP + ATP = dCDP + ADP. This Streptococcus pneumoniae (strain 70585) protein is Cytidylate kinase.